We begin with the raw amino-acid sequence, 219 residues long: Elongation factor Ts (219 aa).

The segment at 82-85 (TDFV) is involved in Mg(2+) ion dislocation from EF-Tu.

Belongs to the EF-Ts family.

It localises to the cytoplasm. Associates with the EF-Tu.GDP complex and induces the exchange of GDP to GTP. It remains bound to the aminoacyl-tRNA.EF-Tu.GTP complex up to the GTP hydrolysis stage on the ribosome. In Anaeromyxobacter sp. (strain K), this protein is Elongation factor Ts.